The primary structure comprises 521 residues: NAD(P)H-quinone oxidoreductase subunit 2 (521 aa).

Helical transmembrane passes span 16-36, 40-60, 80-100, 110-130, 133-153, 168-188, 212-232, 246-266, 280-300, 308-328, 336-356, 380-400, 402-422, and 468-488; these read ILPE…DLIG, VALA…GLLV, LSII…LMSV, LAEF…LSAA, LVMV…MTGY, LLIG…LYGL, LGLA…ISAV, PTPV…AVAI, WHVI…VVAL, MLAY…VAGS, VFYM…IILF, LGLS…GFFG, IYIF…LGLV, and VGIV…NPLF.

Belongs to the complex I subunit 2 family. NDH-1 can be composed of about 15 different subunits; different subcomplexes with different compositions have been identified which probably have different functions.

The protein resides in the cellular thylakoid membrane. The enzyme catalyses a plastoquinone + NADH + (n+1) H(+)(in) = a plastoquinol + NAD(+) + n H(+)(out). The catalysed reaction is a plastoquinone + NADPH + (n+1) H(+)(in) = a plastoquinol + NADP(+) + n H(+)(out). In terms of biological role, NDH-1 shuttles electrons from an unknown electron donor, via FMN and iron-sulfur (Fe-S) centers, to quinones in the respiratory and/or the photosynthetic chain. The immediate electron acceptor for the enzyme in this species is believed to be plastoquinone. Couples the redox reaction to proton translocation, and thus conserves the redox energy in a proton gradient. Cyanobacterial NDH-1 also plays a role in inorganic carbon-concentration. The chain is NAD(P)H-quinone oxidoreductase subunit 2 from Synechocystis sp. (strain ATCC 27184 / PCC 6803 / Kazusa).